Reading from the N-terminus, the 568-residue chain is Sphingosine-1-phosphate lyase 1 (568 aa).

At Met-1–Trp-40 the chain is on the lumenal side. The helical; Signal-anchor for type III membrane protein transmembrane segment at Gln-41–Phe-61 threads the bilayer. The Cytoplasmic portion of the chain corresponds to Gln-62 to His-568. The residue at position 353 (Lys-353) is an N6-(pyridoxal phosphate)lysine; alternate. Lys-353 carries the post-translational modification N6-acetyllysine; alternate. A 3'-nitrotyrosine mark is found at Tyr-356 and Tyr-366. Ser-564 is subject to Phosphoserine.

This sequence belongs to the group II decarboxylase family. Sphingosine-1-phosphate lyase subfamily. In terms of assembly, homodimer. It depends on pyridoxal 5'-phosphate as a cofactor. Ubiquitously expressed. Expressed in fetal and adult adrenal gland (at protein level).

The protein localises to the endoplasmic reticulum membrane. The enzyme catalyses sphinganine 1-phosphate = hexadecanal + phosphoethanolamine. It carries out the reaction sphing-4-enine 1-phosphate = (2E)-hexadecenal + phosphoethanolamine. Its pathway is lipid metabolism; sphingolipid metabolism. Its function is as follows. Cleaves phosphorylated sphingoid bases (PSBs), such as sphingosine-1-phosphate, into fatty aldehydes and phosphoethanolamine. Elevates stress-induced ceramide production and apoptosis. Required for global lipid homeostasis in liver and cholesterol homeostasis in fibroblasts. Involved in the regulation of pro-inflammatory response and neutrophil trafficking. Modulates neuronal autophagy via phosphoethanolamine production which regulates accumulation of aggregate-prone proteins such as APP. Seems to play a role in establishing neuronal contact sites and axonal maintenance. The polypeptide is Sphingosine-1-phosphate lyase 1 (Homo sapiens (Human)).